The following is a 442-amino-acid chain: D-galactonate dehydratase family member SSLG_02014 (442 aa).

Histidine 161 contributes to the substrate binding site. Tyrosine 197 functions as the Proton donor/acceptor in the catalytic mechanism. A Mg(2+)-binding site is contributed by aspartate 246. The active-site Proton donor/acceptor is the histidine 248. 2 residues coordinate Mg(2+): glutamate 272 and glutamate 298. The substrate site is built by glutamate 298, arginine 319, histidine 348, aspartate 352, and glutamate 375.

It belongs to the mandelate racemase/muconate lactonizing enzyme family. GalD subfamily. Mg(2+) serves as cofactor.

It carries out the reaction D-mannonate = 2-dehydro-3-deoxy-D-gluconate + H2O. Functionally, has low D-mannonate dehydratase activity (in vitro), suggesting that this is not a physiological substrate and that it has no significant role in D-mannonate degradation in vivo. Has no detectable activity with a panel of 70 other acid sugars (in vitro). This is D-galactonate dehydratase family member SSLG_02014 from Streptomyces sp. (strain SPB78).